The chain runs to 573 residues: Oxygen sensor histidine kinase response regulator DosT (573 aa).

GAF domains follow at residues 61–198 and 229–366; these read KLDA…GIAV and DPAM…ALAW. H147 serves as a coordination point for heme. The Histidine kinase domain maps to 380–573; the sequence is ILTDRDRIAR…TLLRWSAPLR (194 aa). Residue H392 is modified to Phosphohistidine; by autocatalysis.

The cofactor is Mg(2+). Heme serves as cofactor.

It localises to the cytoplasm. Functionally, interacts with the two-component regulatory system DevR/DevS (DosR/DosS) involved in onset of the dormancy response. Required for full induction of the DevR (DosR) regulon; required during early adaptation to anaerobiosis, to start induction of the DevR regulon. May act as a direct hypoxia/oxygen sensor. May be the secondary sensor for CO. Donates a phosphate group to DevR (DosR). This is Oxygen sensor histidine kinase response regulator DosT (dosT) from Mycobacterium tuberculosis (strain CDC 1551 / Oshkosh).